Here is a 147-residue protein sequence, read N- to C-terminus: Ubiquitin-like-conjugating enzyme ATG10 (147 aa).

Cys116 acts as the Glycyl thioester intermediate in catalysis.

The protein belongs to the ATG10 family. In terms of assembly, forms homooligomers. Interacts with ATG10. Interacts with ATG7 and ATG12.

Its subcellular location is the preautophagosomal structure membrane. Its function is as follows. E2-like enzyme required for the cytoplasm to vacuole transport (Cvt), autophagy and nucleophagy. Acts as an E2-like enzyme that catalyzes the conjugation of ATG12 to ATG5. ATG12 conjugation to ATG5 is required for proper localization of ATG8 to the preautophagosomal structure (PAS). Likely serves as an ATG5-recognition molecule. In Kluyveromyces marxianus (strain DMKU3-1042 / BCC 29191 / NBRC 104275) (Yeast), this protein is Ubiquitin-like-conjugating enzyme ATG10.